The chain runs to 346 residues: Acetylpolyamine amidohydrolase 1 (346 aa).

Catalysis depends on His161, which acts as the Proton donor/acceptor. Residues Asp197, His199, and Asp286 each contribute to the Zn(2+) site.

The protein belongs to the histone deacetylase family. Homodimer. Zn(2+) serves as cofactor.

The catalysed reaction is N-acetylputrescine + H2O = putrescine + acetate. It carries out the reaction N-acetylcadaverine + H2O = cadaverine + acetate. The enzyme catalyses N(1)-acetylspermine + H2O = spermine + acetate. It catalyses the reaction N(1)-acetylspermidine + H2O = spermidine + acetate. The protein operates within amine and polyamine metabolism. Functionally, catalyzes the deacetylation of acetylated polyamines such as N-acetylputrescine, N-acetylcadaverine, N(1)-acetylspermine and N(1)-acetylspermidine. Plays an important role in the metabolism of acetylated polyamines in P.aeruginosa. Is involved in the degradation pathways of N-acetylputrescine and N-acetylcadaverine, that allow P.aeruginosa to utilize these acetylpolyamines as a carbon source under glucose starvation. In vitro, can also hydrolyze artificial trifluoroacetylated and acetylated lysine-derivatives. This chain is Acetylpolyamine amidohydrolase 1, found in Pseudomonas aeruginosa (strain ATCC 15692 / DSM 22644 / CIP 104116 / JCM 14847 / LMG 12228 / 1C / PRS 101 / PAO1).